The sequence spans 524 residues: Apoptosis inhibitor 5 (524 aa).

An ARM-like and Heat-like helical repeats region spans residues 2 to 360; sequence PTVEELYRNY…HQLGRKLPDF (359 aa). Residue Lys251 is modified to N6-acetyllysine. Residues 370 to 391 form a leucine-zipper region; the sequence is LKDFKIRLQYFARGLQVYIRQL. A Phosphothreonine modification is found at Thr399. The segment at 452 to 524 is disordered; it reads GQKRASEDTT…RGNRSRGRLY (73 aa). Residues 454 to 475 carry the Nuclear localization signal motif; the sequence is KRASEDTTSGSPPKKSSAGPKR. Phosphoserine occurs at positions 462, 464, and 469. A compositionally biased stretch (low complexity) spans 462-472; it reads SGSPPKKSSAG. Over residues 487–497 the composition is skewed to polar residues; sequence KYSSNLGNFNY. Omega-N-methylarginine is present on Arg500.

Belongs to the API5 family. In terms of assembly, monomer. Interacts with FGF2 and ACIN1. In terms of processing, acetylation at Lys-251 impairs antiapoptotic function. Expressed in all tissues tested, including heart, brain, placenta, lung, liver, skeletal muscle, kidney and pancreas. Highest levels in heart, pancreas and placenta. Highly expressed in several cancers. Preferentially expressed in squamous cell carcinoma versus adenocarcinoma in non-small cell lung cancer.

It is found in the nucleus. Its subcellular location is the cytoplasm. Functionally, antiapoptotic factor that may have a role in protein assembly. Negatively regulates ACIN1. By binding to ACIN1, it suppresses ACIN1 cleavage from CASP3 and ACIN1-mediated DNA fragmentation. Also known to efficiently suppress E2F1-induced apoptosis. Its depletion enhances the cytotoxic action of the chemotherapeutic drugs. The protein is Apoptosis inhibitor 5 of Homo sapiens (Human).